A 149-amino-acid polypeptide reads, in one-letter code: Arginine repressor (149 aa).

Belongs to the ArgR family.

It is found in the cytoplasm. It functions in the pathway amino-acid biosynthesis; L-arginine biosynthesis [regulation]. Its function is as follows. Regulates arginine biosynthesis genes. The chain is Arginine repressor from Shouchella clausii (strain KSM-K16) (Alkalihalobacillus clausii).